The sequence spans 1427 residues: ATP-binding cassette transporter abc1 (1427 aa).

The chain crosses the membrane as a helical span at residues 26–46 (LLLFYLSLFSLTNLFLIQKLF). Asparagine 49 is a glycosylation site (N-linked (GlcNAc...) asparagine). 9 consecutive transmembrane segments (helical) span residues 63 to 83 (CLLE…SFYL), 87 to 107 (AVWW…NILS), 115 to 135 (LFSW…LISI), 155 to 175 (LLLP…PLFF), 197 to 217 (CSIF…WKSW), 262 to 282 (ILLM…TPLA), 298 to 318 (GNSP…ASVV), 345 to 367 (VLTS…YVYN), and 397 to 417 (MYFL…LAIL). In terms of domain architecture, ABC transmembrane type-1 1 spans 262–549 (ILLMVFLSVL…LASVSRQFIQ (288 aa)). The N-linked (GlcNAc...) asparagine glycan is linked to asparagine 437. The next 2 membrane-spanning stretches (helical) occupy residues 489–509 (IIFK…TFAI) and 513–533 (IMGH…FGLL). 3 N-linked (GlcNAc...) asparagine glycosylation sites follow: asparagine 567, asparagine 581, and asparagine 601. One can recognise an ABC transporter 1 domain in the interval 579–807 (FENTSLSWSP…PSTFFSSNTK (229 aa)). Residues 609–629 (FTLVVGSTGSGKSTLAMALLG) form a helical membrane-spanning segment. 614–621 (GSTGSGKS) serves as a coordination point for ATP. N-linked (GlcNAc...) asparagine glycans are attached at residues asparagine 658 and asparagine 703. A helical membrane pass occupies residues 760–780 (IILFTHNVSLCLPIAENVIVL). 2 N-linked (GlcNAc...) asparagine glycosylation sites follow: asparagine 782 and asparagine 842. The region spanning 862-1142 (ILGSILLVMM…FVRANNEILT (281 aa)) is the ABC transmembrane type-1 2 domain. The next 3 helical transmembrane spans lie at 866-886 (ILLV…IALW), 896-916 (LPSS…YFLM), and 973-993 (LLWA…ITML). An N-linked (GlcNAc...) asparagine glycan is attached at asparagine 994. The next 3 membrane-spanning stretches (helical) occupy residues 995–1015 (VTLV…LVYL), 1086–1106 (LAIR…LIAL), and 1114–1134 (GLVG…LVFV). 2 N-linked (GlcNAc...) asparagine glycosylation sites follow: asparagine 1161 and asparagine 1184. One can recognise an ABC transporter 2 domain in the interval 1180–1422 (VSIKNLTVSY…RRAFWKMCKE (243 aa)). 1214–1221 (GRTGSGKS) is an ATP binding site. The chain crosses the membrane as a helical span at residues 1223-1243 (MGLTLLRFTMIMSGAVEVDGI). Asparagine 1324 carries N-linked (GlcNAc...) asparagine glycosylation.

Belongs to the ABC transporter superfamily. ABCC family. Conjugate transporter (TC 3.A.1.208) subfamily.

The protein localises to the membrane. The chain is ATP-binding cassette transporter abc1 (abc1) from Schizosaccharomyces pombe (strain 972 / ATCC 24843) (Fission yeast).